The sequence spans 477 residues: MTQSRLHAAQNALAKLHERRGNTFYPHFHLAPPAGWMNDPNGLIWFNDRYHAFYQHHPMSEHWGPMHWGHATSDDMIHWQHEPIALAPGDENDKDGCFSGSAVDDNGVLSLIYTGHVWLDGAGNDDAIREVQCLATSRDGIHFEKQGVILTPPEGIMHFRDPKVWREADTWWMVVGAKDPGNTGQILLYRGSSLREWTFDRVLAHADAGESYMWECPDFFSLGDQHYLMFSPQGMNAEGYSYRNRFQSGVIPGMWSPGRLFAQSGHFTELDNGHDFYAPQSFVAKDGRRIVIGWMDMWESPMPSKREGWAGCMTLARELSESNGKLLQRPVHEAESLRQQHQSISPRTISNKYVLQENAQAVEIQLQWALKNSDAEHYGLQLGAGMRLYIDNQSERLVLWRYYPHENLDGYRSIPLPQGDMLALRIFIDTSSVEVFINDGEAVMSSRIYPQPEERELSLYASHGVAVLQHGALWQLG.

Residues 36–39 (WMND), Gln-55, Trp-63, 98–99 (FS), 160–161 (RD), Glu-215, and Trp-298 each bind substrate. Asp-39 is a catalytic residue.

It belongs to the glycosyl hydrolase 32 family.

Its subcellular location is the cytoplasm. The enzyme catalyses Hydrolysis of terminal non-reducing beta-D-fructofuranoside residues in beta-D-fructofuranosides.. It functions in the pathway glycan biosynthesis; sucrose metabolism. Its function is as follows. Enables the bacterium to metabolize sucrose as a sole carbon source. This Escherichia coli protein is Sucrose-6-phosphate hydrolase (cscA).